The chain runs to 208 residues: Large ribosomal subunit protein uL3 (208 aa).

Gln149 carries the post-translational modification N5-methylglutamine.

This sequence belongs to the universal ribosomal protein uL3 family. In terms of assembly, part of the 50S ribosomal subunit. Forms a cluster with proteins L14 and L19. Methylated by PrmB.

Its function is as follows. One of the primary rRNA binding proteins, it binds directly near the 3'-end of the 23S rRNA, where it nucleates assembly of the 50S subunit. This chain is Large ribosomal subunit protein uL3, found in Haemophilus influenzae (strain 86-028NP).